The chain runs to 806 residues: Transitional endoplasmic reticulum ATPase (806 aa).

S3 bears the Phosphoserine mark. ATP-binding positions include P247–L253, N348, H384, and G521–L526. Disordered regions lie at residues R708–P727 and F768–G806. A compositionally biased stretch (low complexity) spans F768 to Q778. Residues G779–N794 are compositionally biased toward gly residues.

Belongs to the AAA ATPase family. In terms of assembly, homohexamer.

It is found in the cytoplasm. Its subcellular location is the cytosol. It localises to the endoplasmic reticulum. The protein resides in the nucleus. It catalyses the reaction ATP + H2O = ADP + phosphate + H(+). Necessary for the fragmentation of Golgi stacks during mitosis and for their reassembly after mitosis. Involved in the formation of the nuclear envelope, and of the transitional endoplasmic reticulum (tER). The transfer of membranes from the endoplasmic reticulum to the Golgi apparatus occurs via 50-70 nm transition vesicles which derive from part-rough, part-smooth transitional elements of the endoplasmic reticulum (tER). Vesicle budding from the tER is an ATP-dependent process. Also involved in DNA damage response: recruited to double-strand breaks (DSBs) sites and promotes the recruitment of tp53bp1 at DNA damage sites. Together with sprtn metalloprotease, involved in the repair of covalent DNA-protein cross-links (DPCs) during DNA synthesis. Involved in interstrand cross-link repair in response to replication stress by mediating unloading of the ubiquitinated CMG helicase complex. Enhances cell cycle progression and inhibits apoptosis at low temperatures. Essential for the maturation of ubiquitin-containing autophagosomes and the clearance of ubiquitinated protein by autophagy. Acts as a negative regulator of type I interferon production by promoting ubiquitination of RIGI. May play a role in the ubiquitin-dependent sorting of membrane proteins to lysosomes where they undergo degradation. May more particularly play a role in caveolins sorting in cells. By controlling the steady-state expression of the IGF1R receptor, indirectly regulates the insulin-like growth factor receptor signaling pathway. The protein is Transitional endoplasmic reticulum ATPase of Danio rerio (Zebrafish).